Reading from the N-terminus, the 290-residue chain is Glycine--tRNA ligase alpha subunit (290 aa).

It belongs to the class-II aminoacyl-tRNA synthetase family. Tetramer of two alpha and two beta subunits.

The protein resides in the cytoplasm. The catalysed reaction is tRNA(Gly) + glycine + ATP = glycyl-tRNA(Gly) + AMP + diphosphate. The protein is Glycine--tRNA ligase alpha subunit of Synechococcus sp. (strain CC9902).